The primary structure comprises 466 residues: Cysteine--tRNA ligase (466 aa).

Cys29 serves as a coordination point for Zn(2+). Positions 31–41 (PTVYNYIHIGN) match the 'HIGH' region motif. Cys209, His234, and Glu238 together coordinate Zn(2+). A 'KMSKS' region motif is present at residues 266–270 (KMSKS). Residue Lys269 participates in ATP binding. Ser270 carries the phosphoserine modification.

Belongs to the class-I aminoacyl-tRNA synthetase family. In terms of assembly, monomer. Zn(2+) is required as a cofactor.

It localises to the cytoplasm. It carries out the reaction tRNA(Cys) + L-cysteine + ATP = L-cysteinyl-tRNA(Cys) + AMP + diphosphate. The protein is Cysteine--tRNA ligase of Bacillus pumilus (strain SAFR-032).